The primary structure comprises 419 residues: MDKLIIRGGRPLNGDVRISGAKNAVLPILASTLLADSPMTIGNVPHLQDVTTTMELLGRMGASLTVDERMHIEVDPTTTHDFVAPYELVKTMRASILVLGPMLARFGQAEVSMPGGCAIGSRPVNLHVDGLAAMGADISIDSGYIRARADRLKGARIVMDIVSVTGTENLMMAAALARGTTVIENAAREPEVVDLANCINTMGGQISGAGTDTIVIDGVETLHGCHYDVLPDRIETGTFLVAGAITGGKVRLRNTAPATLDAVLAKLEEAGAQMNIGEDWIELDMVGRRPRSVGLRTAPYPAFPTDMQAQFMALNSVAEGTAAIVETVFENRFMHALELQRMGADIRVEGNTALVRGVPKLTGAPVMATDLRASASLILAGLVAEGETLVDRIYHIDRGYECIEEKLSQLGASIRRVPG.

Position 22 to 23 (22 to 23) interacts with phosphoenolpyruvate; that stretch reads KN. Arg-93 lines the UDP-N-acetyl-alpha-D-glucosamine pocket. Residue Cys-117 is the Proton donor of the active site. Cys-117 is subject to 2-(S-cysteinyl)pyruvic acid O-phosphothioketal. Positions 306 and 328 each coordinate UDP-N-acetyl-alpha-D-glucosamine.

Belongs to the EPSP synthase family. MurA subfamily.

Its subcellular location is the cytoplasm. The catalysed reaction is phosphoenolpyruvate + UDP-N-acetyl-alpha-D-glucosamine = UDP-N-acetyl-3-O-(1-carboxyvinyl)-alpha-D-glucosamine + phosphate. It participates in cell wall biogenesis; peptidoglycan biosynthesis. Functionally, cell wall formation. Adds enolpyruvyl to UDP-N-acetylglucosamine. This is UDP-N-acetylglucosamine 1-carboxyvinyltransferase from Thioalkalivibrio sulfidiphilus (strain HL-EbGR7).